Consider the following 195-residue polypeptide: dCTP deaminase (195 aa).

DCTP is bound by residues 105 to 110 (RSSLGR), D123, 131 to 133 (TLE), Q152, Y166, K173, and Q177. E133 functions as the Proton donor/acceptor in the catalytic mechanism. A disordered region spans residues 159–195 (KSPAERPYGAERGSKYQGQTGPQASRIQGDREFGGDQ). The span at 160–172 (SPAERPYGAERGS) shows a compositional bias: basic and acidic residues. Residues 174–184 (YQGQTGPQASR) show a composition bias toward polar residues. Over residues 186–195 (QGDREFGGDQ) the composition is skewed to basic and acidic residues.

It belongs to the dCTP deaminase family. In terms of assembly, homotrimer.

It carries out the reaction dCTP + H2O + H(+) = dUTP + NH4(+). It participates in pyrimidine metabolism; dUMP biosynthesis; dUMP from dCTP (dUTP route): step 1/2. Functionally, catalyzes the deamination of dCTP to dUTP. This Natronomonas pharaonis (strain ATCC 35678 / DSM 2160 / CIP 103997 / JCM 8858 / NBRC 14720 / NCIMB 2260 / Gabara) (Halobacterium pharaonis) protein is dCTP deaminase.